Reading from the N-terminus, the 263-residue chain is Small ribosomal subunit protein uS3 (263 aa).

A KH type-2 domain is found at 40–108 (IRNYLFKKFH…HIKVDVDVLE (69 aa)). The tract at residues 224-263 (KPKGSEANHQRRNSNKSKDYRDNKNKQFNKNHQNQQPAKE) is disordered. Residues 239 to 248 (KSKDYRDNKN) show a composition bias toward basic and acidic residues. Over residues 249-263 (KQFNKNHQNQQPAKE) the composition is skewed to low complexity.

It belongs to the universal ribosomal protein uS3 family. Part of the 30S ribosomal subunit. Forms a tight complex with proteins S10 and S14.

Functionally, binds the lower part of the 30S subunit head. Binds mRNA in the 70S ribosome, positioning it for translation. The protein is Small ribosomal subunit protein uS3 of Mycoplasmoides gallisepticum (strain R(low / passage 15 / clone 2)) (Mycoplasma gallisepticum).